We begin with the raw amino-acid sequence, 462 residues long: Asparagine--tRNA ligase (462 aa).

Belongs to the class-II aminoacyl-tRNA synthetase family. In terms of assembly, homodimer.

It is found in the cytoplasm. It catalyses the reaction tRNA(Asn) + L-asparagine + ATP = L-asparaginyl-tRNA(Asn) + AMP + diphosphate + H(+). The protein is Asparagine--tRNA ligase of Borreliella afzelii (strain PKo) (Borrelia afzelii).